The sequence spans 331 residues: SERPKRVFNIYWNVPTFMCHQYDLYFDEVTNFNIKRNSKDDFQGDKIAIFYDPGEFPALLSLKDGKYKKRNGGVPQEGNITIHLQKFIENLDKIYPNRNFSGIGVIDFERWRPIFRQNWGNMKIHKNFSIDLVRNEHPTWNKKMIELEASKRFEKYARFFMEETLKLAKKTRKQADWGYYGYPYCFNMSPNNLVPECDVTAMHENDKMSWLFNNQNVLLPSVYVRQELTPDQRIGLVQGRVKEAVRISNNLKHSPKVLSYWWYVYQDETNTFLTETDVKKTFQEIVINGGDGIIIWGSSSDVNSLSKCKRLQDYLLTVLGPIAINVTEAVN.

Intrachain disulfides connect cysteine 19-cysteine 308 and cysteine 185-cysteine 197. 2 N-linked (GlcNAc...) asparagine glycosylation sites follow: asparagine 79 and asparagine 99. Catalysis depends on glutamate 109, which acts as the Proton donor. N-linked (GlcNAc...) asparagine glycosylation is present at asparagine 127. A glycan (N-linked (GlcNAc...) asparagine) is linked at asparagine 325.

The protein belongs to the glycosyl hydrolase 56 family. In terms of tissue distribution, expressed by the venom gland.

It is found in the secreted. The enzyme catalyses Random hydrolysis of (1-&gt;4)-linkages between N-acetyl-beta-D-glucosamine and D-glucuronate residues in hyaluronate.. Its function is as follows. Hydrolyzes high molecular weight hyaluronic acid to produce small oligosaccharides. The sequence is that of Hyaluronidase A from Vespula vulgaris (Yellow jacket).